The sequence spans 109 residues: Nucleoid-associated protein Spea_1509 (109 aa).

Positions 87–109 are disordered; the sequence is NQKEKMAEVTGGMQLPPGMKMPF.

It belongs to the YbaB/EbfC family. In terms of assembly, homodimer.

It localises to the cytoplasm. Its subcellular location is the nucleoid. In terms of biological role, binds to DNA and alters its conformation. May be involved in regulation of gene expression, nucleoid organization and DNA protection. This chain is Nucleoid-associated protein Spea_1509, found in Shewanella pealeana (strain ATCC 700345 / ANG-SQ1).